Consider the following 477-residue polypeptide: Calcium uptake protein 1, mitochondrial (477 aa).

The transit peptide at 1–33 (MFRLNTLSALAELAVGSRWYHGASQPTQTKRRL) directs the protein to the mitochondrion. The interval 57–107 (AESPPCVNSKKPDTEDKERNKDSGEVSSREGRAADAAAEPYPEDKKKKRSG) is disordered. Residues 66–89 (KKPDTEDKERNKDSGEVSSREGRA) are compositionally biased toward basic and acidic residues. Residues 101-112 (KKKKRSGFRDRK) are polybasic region. Phosphoserine; by PKB is present on serine 124. The segment at 128–131 (KIFR) is k/R-ring. The EF-hand 1 domain maps to 220-255 (TPQRNFEIAFKMFDLNGDGEVDMEEFEQVQSIIRSQ). Ca(2+) is bound by residues aspartate 233, asparagine 235, aspartate 237, glutamate 239, and glutamate 244. Residues 261-265 (RHRDR) are k/R-ring. The 21-residue stretch at 356 to 376 (KDGKGLTFQEVENFFTFLKNI) folds into the EF-hand 2; degenerate domain. Residues 410–445 (LSDHVCDVVFALFDCDGNGELSNKEFVSIMKQRLMR) enclose the EF-hand 3 domain. The Ca(2+) site is built by aspartate 423, aspartate 425, asparagine 427, glutamate 429, and glutamate 434. Arginine 457 is subject to Asymmetric dimethylarginine. Residues 457–467 (RLMQAMWKCAQ) form a C-helix region region.

This sequence belongs to the MICU1 family. MICU1 subfamily. In terms of assembly, heterodimer; disulfide-linked; heterodimerizes with MICU2 or MICU3. Homodimer; disulfide-linked. Component of the uniplex complex, composed of MCU, EMRE/SMDT1, MICU1 and MICU2 (or MICU3) in a 4:4:1:1 stoichiometry. The composition of calcium sensors within the uniplex complex can differ depending on tissues: a MICU1 homodimer can be present instead of the MICU1-MICU2 heterodimer in skeletal-muscle and kidney. MICU1 is recruited to the uniplex complex by EMRE/SMDT1, and it associates with MCU at low calcium levels, occluding the pore of the MCU channel. Associates with the MICOS complex. Interacts with SLC25A23. Interacts with CHCHD4/MIA40; which introduces the interchain disulfide bond with MICU2. Interacts (when methylated) with UCP2; leading to decrease the calcium sensitivity of MICU1. As to quaternary structure, heterodimer; disulfide-linked; heterodimerizes with MICU2 or MICU3. Heterodimerizes with MICU3 in skeletal muscle. Component of the uniplex complex, composed of MCU, EMRE/SMDT1, MICU1 and MICU2 (or MICU3) in a 4:4:1:1 stoichiometry. Also localizes to mitochondrial cristae junctions. Post-translationally, phosphorylation at Ser-124 by AKT1 impairs its maturation and stability. In terms of processing, asymmetric dimethylation at Arg-457 by PRMT1 decreases the calcium sensitivity of MICU1 by promoting interaction with UCP2. Degraded by YME1L1 when not complexed as homodimer or heterodimer. Not degraded when complexed as homodimer or heterodimer; the presence of the interchain disulfide bond protecting MICU1 from degradation by YME1L1. In terms of tissue distribution, expressed in skeletal muscle, heart, kidney, liver, brain, lung, fat and spleen. Specifically expressed in the skeletal muscle.

It is found in the mitochondrion intermembrane space. The protein resides in the mitochondrion inner membrane. Its function is as follows. Calcium sensor of the mitochondrial calcium uniporter (MCU) channel, which senses calcium level via its EF-hand domains. MICU1 and MICU2 (or MICU3) form a disulfide-linked heterodimer that stimulates and inhibits MCU activity, depending on the concentration of calcium. At low calcium levels, MICU1 occludes the pore of the MCU channel, preventing mitochondrial calcium uptake. At higher calcium levels, calcium-binding to MICU1 and MICU2 (or MICU3) induces a conformational change that weakens MCU-MICU1 interactions and moves the MICU1-MICU2 heterodimer away from the pore, allowing calcium permeation through the MCU channel. Also required to protect against manganese toxicity by preventing manganese uptake by MCU: mechanistically, manganese-binding to its EF-hand domains does not induce any conformational change, maintaining MCU pore occlusion. Acts as a regulator of mitochondrial cristae structure independently of its ability to regulate the mitochondrial calcium uniporter channel. Regulates glucose-dependent insulin secretion in pancreatic beta-cells by regulating mitochondrial calcium uptake. Induces T-helper 1-mediated autoreactivity, which is accompanied by the release of IFNG. Functionally, isoform that regulates mitochondrial calcium uniporter (MCU) in the skeletal muscle. Compared to other isoforms, this isoform has higher affinity for calcium, promoting mitochondrial calcium uptake at lower calcium concentrations. This allows a rapid response of mitochondrial metabolism and ensures sustained ATP production needed for resistance and strenuous exercise. The sequence is that of Calcium uptake protein 1, mitochondrial from Mus musculus (Mouse).